Here is a 323-residue protein sequence, read N- to C-terminus: NADH-ubiquinone oxidoreductase chain 1 (323 aa).

A run of 8 helical transmembrane segments spans residues 8-28, 75-95, 105-125, 151-171, 177-197, 234-254, 258-278, and 298-318; these read LINP…LTLI, MFLI…APLP, LGIL…LGSG, LGLI…TTLM, MWLI…TLAE, ANIL…SSFM, ELTT…FLWV, and FLPI…SMLG.

It belongs to the complex I subunit 1 family. Core subunit of respiratory chain NADH dehydrogenase (Complex I) which is composed of 45 different subunits.

It localises to the mitochondrion inner membrane. The enzyme catalyses a ubiquinone + NADH + 5 H(+)(in) = a ubiquinol + NAD(+) + 4 H(+)(out). Functionally, core subunit of the mitochondrial membrane respiratory chain NADH dehydrogenase (Complex I) which catalyzes electron transfer from NADH through the respiratory chain, using ubiquinone as an electron acceptor. Essential for the catalytic activity and assembly of complex I. The protein is NADH-ubiquinone oxidoreductase chain 1 (mt-nd1) of Xenopus laevis (African clawed frog).